Here is a 90-residue protein sequence, read N- to C-terminus: DNA-binding protein HU-alpha (90 aa).

This sequence belongs to the bacterial histone-like protein family. Heterodimer of an alpha and a beta chain.

Histone-like DNA-binding protein which is capable of wrapping DNA to stabilize it, and thus to prevent its denaturation under extreme environmental conditions. This Pseudomonas aeruginosa (strain ATCC 15692 / DSM 22644 / CIP 104116 / JCM 14847 / LMG 12228 / 1C / PRS 101 / PAO1) protein is DNA-binding protein HU-alpha (hupA).